Here is a 95-residue protein sequence, read N- to C-terminus: Protein TusB (95 aa).

It belongs to the DsrH/TusB family. As to quaternary structure, heterohexamer, formed by a dimer of trimers. The hexameric TusBCD complex contains 2 copies each of TusB, TusC and TusD. The TusBCD complex interacts with TusE.

It is found in the cytoplasm. Part of a sulfur-relay system required for 2-thiolation of 5-methylaminomethyl-2-thiouridine (mnm(5)s(2)U) at tRNA wobble positions. This Pectobacterium atrosepticum (strain SCRI 1043 / ATCC BAA-672) (Erwinia carotovora subsp. atroseptica) protein is Protein TusB.